Here is a 483-residue protein sequence, read N- to C-terminus: UDP-N-acetylmuramyl-tripeptide synthetase (483 aa).

UDP-N-acetyl-alpha-D-muramoyl-L-alanyl-D-glutamate is bound at residue S43. 116–122 is a binding site for ATP; it reads GTKGKTT. Residues 160–161, S187, and R195 each bind UDP-N-acetyl-alpha-D-muramoyl-L-alanyl-D-glutamate; that span reads TT. Position 229 is an N6-carboxylysine (K229).

Belongs to the MurCDEF family. MurE subfamily. In terms of processing, carboxylation is probably crucial for Mg(2+) binding and, consequently, for the gamma-phosphate positioning of ATP.

It is found in the cytoplasm. It functions in the pathway cell wall biogenesis; peptidoglycan biosynthesis. In terms of biological role, catalyzes the addition of an amino acid to the nucleotide precursor UDP-N-acetylmuramoyl-L-alanyl-D-glutamate (UMAG) in the biosynthesis of bacterial cell-wall peptidoglycan. This is UDP-N-acetylmuramyl-tripeptide synthetase from Lactococcus lactis subsp. cremoris (strain MG1363).